Consider the following 300-residue polypeptide: Telomere repeat-binding factor 1 (300 aa).

The HTH myb-type domain maps to 1–58 (MGAPKQKWTQEEESALKSGVIKHGPGKWRTILKDPEFSGVLYLRSNVDLKDKWRNMSV). Positions 28–57 (WRTILKDPEFSGVLYLRSNVDLKDKWRNMS) form a DNA-binding region, H-T-H motif. 2 disordered regions span residues 93–119 (LQSD…RPNV) and 185–213 (NSTP…PSPK). Residues 117–185 (PNVRLDSLIM…KVKRKYRIPN (69 aa)) enclose the H15 domain. Positions 241–290 (EAAAVAAQAVAEAEAAMAEAEEAAKEAEAAEAEAEAAQAFAEEASKTLKG) form a coiled coil.

The protein belongs to the histone H1/H5 family. SMH subfamily. Forms a homodimer and heterodimers with TRB2 or TRB3. Interacts with POT1b, TRB2 and TRB3 through its H15 domain.

The protein resides in the nucleus. It is found in the nucleolus. It localises to the chromosome. Binds preferentially double-stranded telomeric repeats. This is Telomere repeat-binding factor 1 (TRB1) from Arabidopsis thaliana (Mouse-ear cress).